The chain runs to 372 residues: Maltose/maltodextrin import ATP-binding protein MalK (372 aa).

One can recognise an ABC transporter domain in the interval 4-234 (VSLRNVGKSY…PANRFVAGFI (231 aa)). Position 36 to 43 (36 to 43 (GPSGCGKS)) interacts with ATP.

The protein belongs to the ABC transporter superfamily. Maltooligosaccharide importer (TC 3.A.1.1.1) family. As to quaternary structure, the complex is composed of two ATP-binding proteins (MalK), two transmembrane proteins (MalG and MalK) and a solute-binding protein (MalE).

The protein resides in the cell inner membrane. It carries out the reaction D-maltose(out) + ATP + H2O = D-maltose(in) + ADP + phosphate + H(+). Functionally, part of the ABC transporter complex MalEFGK involved in maltose/maltodextrin import. Responsible for energy coupling to the transport system. The sequence is that of Maltose/maltodextrin import ATP-binding protein MalK from Mannheimia succiniciproducens (strain KCTC 0769BP / MBEL55E).